Reading from the N-terminus, the 157-residue chain is RxLR effector protein PITG_04049 (157 aa).

An N-terminal signal peptide occupies residues 1–23 (MRLIAGVLAGFLVICEVTSTSES). The RxLR-dEER motif lies at 51–65 (QFLRTDVVMNRGEER).

This sequence belongs to the RxLR effector family.

The protein resides in the secreted. The protein localises to the host cytoplasm. Its subcellular location is the host nucleus. Functionally, effector that might be involved in host plant infection. The chain is RxLR effector protein PITG_04049 from Phytophthora infestans (strain T30-4) (Potato late blight agent).